Consider the following 150-residue polypeptide: Large ribosomal subunit protein bL9 (150 aa).

Belongs to the bacterial ribosomal protein bL9 family.

In terms of biological role, binds to the 23S rRNA. The chain is Large ribosomal subunit protein bL9 from Ralstonia nicotianae (strain ATCC BAA-1114 / GMI1000) (Ralstonia solanacearum).